A 170-amino-acid polypeptide reads, in one-letter code: Adenine phosphoribosyltransferase (170 aa).

It belongs to the purine/pyrimidine phosphoribosyltransferase family. Homodimer.

The protein resides in the cytoplasm. It carries out the reaction AMP + diphosphate = 5-phospho-alpha-D-ribose 1-diphosphate + adenine. The protein operates within purine metabolism; AMP biosynthesis via salvage pathway; AMP from adenine: step 1/1. Its function is as follows. Catalyzes a salvage reaction resulting in the formation of AMP, that is energically less costly than de novo synthesis. This Lactococcus lactis subsp. cremoris (strain SK11) protein is Adenine phosphoribosyltransferase.